The chain runs to 384 residues: 4-coumarate--CoA ligase (384 aa).

The protein belongs to the ATP-dependent AMP-binding enzyme family.

It catalyses the reaction (E)-4-coumarate + ATP + CoA = (E)-4-coumaroyl-CoA + AMP + diphosphate. Its function is as follows. Converts p-coumaric acid into p-coumaryl CoA. This is necessary for the activation of the photoactive yellow protein (PYP) chromophore. The chain is 4-coumarate--CoA ligase (pcl) from Rhodobacter capsulatus (strain ATCC BAA-309 / NBRC 16581 / SB1003).